Reading from the N-terminus, the 409-residue chain is uncharacterized protein (409 aa).

In terms of domain architecture, HTH arsR-type spans L305–M409.

This is an uncharacterized protein from Methanocaldococcus jannaschii (strain ATCC 43067 / DSM 2661 / JAL-1 / JCM 10045 / NBRC 100440) (Methanococcus jannaschii).